The chain runs to 349 residues: Protein RecA (349 aa).

Residue 66-73 (GPESSGKT) participates in ATP binding.

Belongs to the RecA family.

The protein localises to the cytoplasm. In terms of biological role, can catalyze the hydrolysis of ATP in the presence of single-stranded DNA, the ATP-dependent uptake of single-stranded DNA by duplex DNA, and the ATP-dependent hybridization of homologous single-stranded DNAs. It interacts with LexA causing its activation and leading to its autocatalytic cleavage. The chain is Protein RecA from Psychrobacter sp. (strain PRwf-1).